Here is a 157-residue protein sequence, read N- to C-terminus: Arginine repressor (157 aa).

Belongs to the ArgR family.

The protein localises to the cytoplasm. It participates in amino-acid biosynthesis; L-arginine biosynthesis [regulation]. Functionally, regulates arginine biosynthesis genes. The sequence is that of Arginine repressor from Deinococcus deserti (strain DSM 17065 / CIP 109153 / LMG 22923 / VCD115).